The primary structure comprises 567 residues: Zinc finger protein 512 (567 aa).

Positions 1-32 (MSSRLGAVPATSGPTTFKQQRSTRIVGAKNSR) are disordered. Residues 12–23 (SGPTTFKQQRST) are compositionally biased toward polar residues. Residues Lys-18 and Lys-84 each participate in a glycyl lysine isopeptide (Lys-Gly) (interchain with G-Cter in SUMO2) cross-link. The tract at residues 86–148 (AATSHVEGSG…QARRIRKEPP (63 aa)) is disordered. A compositionally biased stretch (basic residues) spans 119–130 (KKHKLYGRKQRP). The C2H2-type 1 zinc finger occupies 197–220 (FTCHHCGKQLRSLAGMKYHVMANH). Residue Lys-227 forms a Glycyl lysine isopeptide (Lys-Gly) (interchain with G-Cter in SUMO2) linkage. The C2H2-type 2 zinc finger occupies 287–310 (LKCHHCGKPYRSKAGLAYHLRSEH). Residue Lys-333 forms a Glycyl lysine isopeptide (Lys-Gly) (interchain with G-Cter in SUMO2) linkage. The C2H2-type 3; atypical zinc-finger motif lies at 406-430 (IQCPNQGCEAVYSSVSGLKAHLGSC). The C2H2-type 4 zinc finger occupies 440–463 (YKCLLCQKEFVSESGVKYHINSVH). Residues 486-567 (QRQQEEEKRR…PKTNHKRGRK (82 aa)) are disordered. The span at 495–508 (RQQHRSRRSLRRRQ) shows a compositional bias: basic residues. The segment covering 523–532 (VGKDQRRNNE) has biased composition (basic and acidic residues). The span at 556 to 567 (KPPKTNHKRGRK) shows a compositional bias: basic residues.

It belongs to the krueppel C2H2-type zinc-finger protein family.

It is found in the nucleus. In terms of biological role, may be involved in transcriptional regulation. In Homo sapiens (Human), this protein is Zinc finger protein 512 (ZNF512).